The following is a 615-amino-acid chain: Membrane protein insertase YidC (615 aa).

A run of 5 helical transmembrane segments spans residues 9–29, 384–404, 458–478, 516–536, and 556–576; these read LMFIVSAFAILIGYQFFVLGP, LVGNFGLAILLLTVVLKLVLY, LPMLIQIPVFYALYKVLTVTI, LIGAMIAHLGVWPLLYGFTMW, and WFPVIFTFTLSGFAVGLVIYW.

This sequence belongs to the OXA1/ALB3/YidC family. Type 1 subfamily. In terms of assembly, interacts with the Sec translocase complex via SecD. Specifically interacts with transmembrane segments of nascent integral membrane proteins during membrane integration.

Its subcellular location is the cell inner membrane. Required for the insertion and/or proper folding and/or complex formation of integral membrane proteins into the membrane. Involved in integration of membrane proteins that insert both dependently and independently of the Sec translocase complex, as well as at least some lipoproteins. Aids folding of multispanning membrane proteins. The polypeptide is Membrane protein insertase YidC (Caulobacter vibrioides (strain ATCC 19089 / CIP 103742 / CB 15) (Caulobacter crescentus)).